Here is a 227-residue protein sequence, read N- to C-terminus: Nudix hydrolase 27, chloroplastic (227 aa).

The N-terminal 44 residues, 1–44 (MAVKASGFIGKSAISVHLDFSSFPVKFSCLKQFSVSSPKPLVVL), are a transit peptide targeting the chloroplast. Positions 61 to 208 (GYRKNVGICL…KRPVYEHVIK (148 aa)) constitute a Nudix hydrolase domain. The short motif at 94-115 (GGADEGEDLRNAAFRELREETG) is the Nudix box element. E109 and E113 together coordinate Mn(2+).

It belongs to the Nudix hydrolase family. Requires Mg(2+) as cofactor. Mn(2+) is required as a cofactor. Expressed in roots, leaves, stems and inflorescences.

It localises to the plastid. The protein resides in the chloroplast. Functionally, mediates the hydrolysis of some nucleoside diphosphate derivatives. Can use diadenosine 5',5'''-P(1)P(5) pentaphosphate (Ap(5)A) as substrates. This chain is Nudix hydrolase 27, chloroplastic (NUDT27), found in Arabidopsis thaliana (Mouse-ear cress).